A 112-amino-acid polypeptide reads, in one-letter code: Large ribosomal subunit protein eL22 (112 aa).

This sequence belongs to the eukaryotic ribosomal protein eL22 family. As to quaternary structure, component of the large ribosomal subunit.

It localises to the cytoplasm. The protein is Large ribosomal subunit protein eL22 (RPL22) of Encephalitozoon cuniculi (strain GB-M1) (Microsporidian parasite).